The following is a 44-amino-acid chain: uncharacterized protein (44 aa).

This is an uncharacterized protein from Haemophilus influenzae (strain ATCC 51907 / DSM 11121 / KW20 / Rd).